A 74-amino-acid chain; its full sequence is Protein kish-B (74 aa).

The N-terminal stretch at 1–22 (MTNVYSFDGILVFGLLFICTCA) is a signal peptide. The Extracellular portion of the chain corresponds to 23–52 (YLKKVPRLNSWLLSEKKGVWGVFYKAAVIG). The chain crosses the membrane as a helical span at residues 53 to 73 (TRLHVVVAASCLCMAFYLIFL). Lys-74 is a topological domain (cytoplasmic).

The protein belongs to the KISH family.

It is found in the golgi apparatus membrane. Functionally, involved in the early part of the secretory pathway. This Danio rerio (Zebrafish) protein is Protein kish-B (tmem167b).